A 359-amino-acid polypeptide reads, in one-letter code: Palmitoyltransferase ERF2 (359 aa).

Residues 1 to 21 (MALVSRRSTRSESTSITKEEH) form a disordered region. Over 1–75 (MALVSRRSTR…RFRTVKGAKP (75 aa)) the chain is Cytoplasmic. A helical transmembrane segment spans residues 76-96 (LWLGVLLAIVCPMVLFSIFEA). The Lumenal portion of the chain corresponds to 97–104 (HKLWHTQN). Residues 105–125 (GYKVLVIFFYYFWVITLASFI) traverse the membrane as a helical segment. Residues 126–217 (RTATSDPGVL…NCIGKRNYRF (92 aa)) are Cytoplasmic-facing. Residues 173 to 223 (KYCPSCRIWRPPRSSHCSTCNVCVMVHDHHCIWVNNCIGKRNYRFFLIFLL) form the DHHC domain. The S-palmitoyl cysteine intermediate role is filled by Cys203. The chain crosses the membrane as a helical span at residues 218–238 (FLIFLLGAILSSVILLTNCAI). The Lumenal segment spans residues 239–250 (HIARESGGPRDC). Residues 251–271 (PVAILLLCYAGLTLWYPAILF) traverse the membrane as a helical segment. Residues 272–359 (TYHIFMAGNQ…AHSFEKIQKI (88 aa)) lie on the Cytoplasmic side of the membrane.

It belongs to the DHHC palmitoyltransferase family. ERF2/ZDHHC9 subfamily. Interacts with SHR5. Autopalmitoylated.

Its subcellular location is the endoplasmic reticulum membrane. It catalyses the reaction L-cysteinyl-[protein] + hexadecanoyl-CoA = S-hexadecanoyl-L-cysteinyl-[protein] + CoA. Its function is as follows. The ERF2-SHR5 complex is a palmitoyltransferase specific for Ras proteins. Palmitoylates RAS2, which is required for its proper plasma membrane localization. This chain is Palmitoyltransferase ERF2 (ERF2), found in Saccharomyces cerevisiae (strain ATCC 204508 / S288c) (Baker's yeast).